A 598-amino-acid chain; its full sequence is (+)-bornyl diphosphate synthase, chloroplastic (598 aa).

Residues 1-54 (MSIISMNVSILSKPLNCLHNLERRPSKALLVPCTAPTARLRASCSSKLQEAHQI) constitute a chloroplast transit peptide. Substrate is bound at residue arginine 314. Residues aspartate 351 and aspartate 355 each contribute to the Mg(2+) site. The DDXXD motif signature appears at 351 to 355 (DDIYD). Arginine 493 contributes to the substrate binding site. Aspartate 496, threonine 500, and glutamate 504 together coordinate Mg(2+). Threonine 500 serves as a coordination point for substrate. Lysine 512 contributes to the substrate binding site.

This sequence belongs to the terpene synthase family. As to quaternary structure, homodimer. It depends on Mg(2+) as a cofactor.

Its subcellular location is the plastid. The protein resides in the chloroplast. It carries out the reaction (2E)-geranyl diphosphate = (2S,4R)-bornyl diphosphate. The enzyme catalyses (2E)-geranyl diphosphate = (1R,4S)-camphene + diphosphate. The catalysed reaction is (2E)-geranyl diphosphate = (1R,5R)-alpha-pinene + diphosphate. It functions in the pathway terpene metabolism; (R)-camphor biosynthesis. In terms of biological role, catalyzes the formation of the (+)-camphor precursor (+)-bornyl diphosphate from geranyl diphosphate. The enzyme also produces significant amounts of (+)-alpha-pinene, (+)-camphene, and (+-)-limonene. The polypeptide is (+)-bornyl diphosphate synthase, chloroplastic (Salvia officinalis (Sage)).